A 28-amino-acid chain; its full sequence is Ranatuerin-2AVb (28 aa).

The cysteines at positions 23 and 28 are disulfide-linked.

Expressed by the skin glands.

The protein localises to the secreted. Functionally, has antibacterial activity. The protein is Ranatuerin-2AVb of Rana arvalis (Moor frog).